The chain runs to 134 residues: Salivary protein 15 Iric-1 (134 aa).

Residues 1 to 21 (MESFVAMKVVCITVLFVIVAV) form the signal peptide. N-linked (GlcNAc...) asparagine glycosylation is present at Asn22. A required for Borrelia OspC-binding region spans residues 48 to 67 (PSYIRNPQKLALELLEICKN). Residues Asn91 and Asn103 are each glycosylated (N-linked (GlcNAc...) asparagine). Residues 115–134 (GPNGETCAEKSKCVGHIPGC) form a CD4-binding region.

It belongs to the salp15 family. In terms of assembly, monomer. Interacts with host CD4. Interacts with host DC-SIGN (CD209). As to quaternary structure, (Microbial infection) Interacts with Borrelia outer surface protein C (OspC). Expressed in salivary glands. Detected in fed adult female.

The protein localises to the secreted. In terms of biological role, salivary tick protein that downregulates host immune system by binding to both dendritic cells, and CD4(+) T cells. Specifically binds to the CD4 coreceptor on T cells. This interaction prevents the activation of the Src kinase, Lck, and its downstream substrate Zap-70, and results in deficient activation of PLCgamma1, the repression of calcium fluxes triggered by T-cell antigen receptor (TCR) ligation, and a subsequent reduction in interleukin-2 production. This salivary protein also binds to DC-SIGN (CD209) on dendritic cells (DC) and activates the Raf-1 kinase/MEK signaling pathway that results in down-regulating expression of pro-inflammatory cytokines. Furthermore, it inhibits T cell proliferation induced by DCs. In addition, it inhibits in vitro keratinocyte inflammation induced by Borrelia burgdorferi or by the major outer surface protein (OspC) of Borrelia. In addition, it downregulates chemokines and monocyte chemoattractant protein 1, as well as several antimicrobial peptides such as defensins, cathelicidin, psoriasin, and RNase 7. Apart from its immunomodulatory activities, it is also associated with protection of Borrelia spirochetes from antibody-mediated killing through its binding to OspC. In vivo, tests on different immune disease animal models show promising therapeutic results, e.g., in inhibiting HIV infection, experimental autoimmune encephalomyelitis, transplantation rejection, and asthma. (Microbial infection) Protects Borrelia garinii (strain VSBP) from host complement-mediated killing by binding to the surface of spirochetes and preventing deposition of host C5b-9 membrane attack complexes. Protects Borrelia garinii (strain A87S) from host complement-mediated killing. Its function is as follows. (Microbial infection) Partially protects Borrelia burgdorferi (strains VS215 and B31) from host complement-mediated killing. The sequence is that of Salivary protein 15 Iric-1 from Ixodes ricinus (Common tick).